The sequence spans 147 residues: MLGEFKKFAMRGNVVDMAVGIVIGAAFGSIVKSLVDDVLMPPIGLLLGGVDFSDFFVVLKEGVKAAAPYQTLAEAKAAGAVTLNFGLFVNAIISFTIVAFALFMIVKAMNKLRADEEVKPVTTKKCPHCCSEIALEATRCPHCTSEL.

Helical transmembrane passes span 14-34 (VVDMAVGIVIGAAFGSIVKSL) and 85-105 (FGLFVNAIISFTIVAFALFMI).

Belongs to the MscL family. As to quaternary structure, homopentamer.

It localises to the cell inner membrane. Functionally, channel that opens in response to stretch forces in the membrane lipid bilayer. May participate in the regulation of osmotic pressure changes within the cell. In Tolumonas auensis (strain DSM 9187 / NBRC 110442 / TA 4), this protein is Large-conductance mechanosensitive channel.